Here is a 144-residue protein sequence, read N- to C-terminus: Maximins 7/H13 (144 aa).

Positions 1–18 (MNFKYIVAVSFLIASAYA) are cleaved as a signal peptide. Positions 19–43 (RSEENDEQSLSQRDVLEEESLREIR) are excised as a propeptide. Asn70 bears the Asparagine amide mark. Residues 74 to 123 (TAEDHEVMKRLEAVMRDLDSLDYPEEAAERETRGFNQEEIANLFTKKEKR) constitute a propeptide that is removed on maturation. Leu143 is subject to Leucine amide.

Belongs to the bombinin family. As to expression, expressed by the skin glands.

Its subcellular location is the secreted. Maximin-7 shows antimicrobial activity against bacteria and against the fungus C.albicans. It has little hemolytic activity. In terms of biological role, maximin-H13 shows antimicrobial activity against bacteria and against the fungus C.albicans. Shows strong hemolytic activity. This is Maximins 7/H13 from Bombina maxima (Giant fire-bellied toad).